The primary structure comprises 488 residues: ATP synthase subunit beta (488 aa).

164-171 (GGAGVGKT) contacts ATP.

This sequence belongs to the ATPase alpha/beta chains family. F-type ATPases have 2 components, CF(1) - the catalytic core - and CF(0) - the membrane proton channel. CF(1) has five subunits: alpha(3), beta(3), gamma(1), delta(1), epsilon(1). CF(0) has four main subunits: a(1), b(1), b'(1) and c(9-12).

It is found in the cellular thylakoid membrane. The enzyme catalyses ATP + H2O + 4 H(+)(in) = ADP + phosphate + 5 H(+)(out). Produces ATP from ADP in the presence of a proton gradient across the membrane. The catalytic sites are hosted primarily by the beta subunits. The chain is ATP synthase subunit beta from Prochlorococcus marinus (strain MIT 9303).